The chain runs to 153 residues: NADH dehydrogenase [ubiquinone] 1 beta subcomplex subunit 11, mitochondrial (153 aa).

The transit peptide at 1–29 (MAAGLFGLSARLLLAAAATRGLPAARVRW) directs the protein to the mitochondrion. Residues 40–77 (PSAVAGKRPPEPTTQWQEDPEPEDENLYEKNPDSHGYD) form a disordered region. Residues 66–77 (LYEKNPDSHGYD) are compositionally biased toward basic and acidic residues. A helical transmembrane segment spans residues 89–109 (LVFFFGVSIILVLGSTFVAYL).

Belongs to the complex I NDUFB11 subunit family. Complex I is composed of 45 different subunits. Interacts with BCAP31.

It localises to the mitochondrion inner membrane. Its function is as follows. Accessory subunit of the mitochondrial membrane respiratory chain NADH dehydrogenase (Complex I), that is believed not to be involved in catalysis. Complex I functions in the transfer of electrons from NADH to the respiratory chain. The immediate electron acceptor for the enzyme is believed to be ubiquinone. In Pan troglodytes (Chimpanzee), this protein is NADH dehydrogenase [ubiquinone] 1 beta subcomplex subunit 11, mitochondrial (NDUFB11).